Reading from the N-terminus, the 490-residue chain is ATP synthase subunit beta (490 aa).

Gly-175–Thr-182 contacts ATP.

The protein belongs to the ATPase alpha/beta chains family. In terms of assembly, F-type ATPases have 2 components, CF(1) - the catalytic core - and CF(0) - the membrane proton channel. CF(1) has five subunits: alpha(3), beta(3), gamma(1), delta(1), epsilon(1). CF(0) has three main subunits: a(1), b(2) and c(9-12). The alpha and beta chains form an alternating ring which encloses part of the gamma chain. CF(1) is attached to CF(0) by a central stalk formed by the gamma and epsilon chains, while a peripheral stalk is formed by the delta and b chains.

It is found in the cell membrane. The catalysed reaction is ATP + H2O + 4 H(+)(in) = ADP + phosphate + 5 H(+)(out). Functionally, produces ATP from ADP in the presence of a proton gradient across the membrane. The catalytic sites are hosted primarily by the beta subunits. The chain is ATP synthase subunit beta from Acidothermus cellulolyticus (strain ATCC 43068 / DSM 8971 / 11B).